Here is a 301-residue protein sequence, read N- to C-terminus: MHIHPNFDPVAIHLGPLAVRWYGLMYLVAFIMAIVVGRLRLRLPHVAAQGWTPKDIDDMLFYGVLGTILGGRFGYVLFYKASWYFAHPLDVFKVWEGGMSFHGGFLGVTFAMILFAWQRKRTWLQVTDFVAPMVPAGLAAGRLGNFINGELWGRVTSPDAPWAMLFPGAANEDAGWLVTHPAQAAQWHLADVFAQYHMLPRHPSQLYEIALEGVVLFLVLWLFSRKPRPVGAASAVFLIGYGLARFTVEFAREPDDFLGLLALGLSMGQWLSLPMIIAGVVMLLWAYRRNGRSAAQAAGVS.

Transmembrane regions (helical) follow at residues 17–37 (LAVRWYGLMYLVAFIMAIVVG), 59–79 (MLFYGVLGTILGGRFGYVLFY), 97–117 (GGMSFHGGFLGVTFAMILFAW), 129–149 (FVAPMVPAGLAAGRLGNFING), 203–223 (PSQLYEIALEGVVLFLVLWLF), 230–250 (VGAASAVFLIGYGLARFTVEF), and 257–277 (FLGLLALGLSMGQWLSLPMII). Residue Arg-142 participates in a 1,2-diacyl-sn-glycero-3-phospho-(1'-sn-glycerol) binding.

Belongs to the Lgt family.

It is found in the cell inner membrane. It carries out the reaction L-cysteinyl-[prolipoprotein] + a 1,2-diacyl-sn-glycero-3-phospho-(1'-sn-glycerol) = an S-1,2-diacyl-sn-glyceryl-L-cysteinyl-[prolipoprotein] + sn-glycerol 1-phosphate + H(+). The protein operates within protein modification; lipoprotein biosynthesis (diacylglyceryl transfer). Its function is as follows. Catalyzes the transfer of the diacylglyceryl group from phosphatidylglycerol to the sulfhydryl group of the N-terminal cysteine of a prolipoprotein, the first step in the formation of mature lipoproteins. The sequence is that of Phosphatidylglycerol--prolipoprotein diacylglyceryl transferase from Paraburkholderia phymatum (strain DSM 17167 / CIP 108236 / LMG 21445 / STM815) (Burkholderia phymatum).